A 2907-amino-acid chain; its full sequence is Fibrillin-2 (2907 aa).

Residues 1-28 form the signal peptide; the sequence is MGRRRRLCLQPYFVWLGCVALWAQGTDG. Positions 26–58 are disordered; sequence TDGQPQPPPPKTLRPQPPPQQVRPAVAGSEGGF. Positions 29-77 are excised as a propeptide; it reads QPQPPPPKTLRPQPPPQQVRPAVAGSEGGFMGPEYRDEGAVAASRVRRR. Pro residues predominate over residues 30-46; that stretch reads PQPPPPKTLRPQPPPQQ. EGF-like domains lie at 111-142, 145-176, and 176-208; these read IVPI…PTCG, SIQQ…TYCG, and GQPV…PQCE. 9 disulfides stabilise this stretch: Cys115-Cys124, Cys119-Cys130, Cys132-Cys141, Cys149-Cys159, Cys153-Cys164, Cys166-Cys175, Cys180-Cys190, Cys184-Cys196, and Cys198-Cys207. The interval 149-359 is interaction with MFAP4; that stretch reads CSVRCMNGGT…VTSTDGSRCI (211 aa). The 53-residue stretch at 214-266 folds into the TB 1 domain; the sequence is GPCFTQVNNQMCQGQLTGIVCTKTLCCATIGRAWGHPCEMCPAQPQPCRRGFI. The 42-residue stretch at 276–317 folds into the EGF-like 4; calcium-binding domain; that stretch reads DVDECQAIPGLCQGGNCINTVGSFECRCPAGHKQSETTQKCE. 6 disulfides stabilise this stretch: Cys280–Cys292, Cys287–Cys301, Cys303–Cys316, Cys322–Cys334, Cys329–Cys343, and Cys345–Cys358. A glycan (O-linked (Glc) serine) is linked at Ser298. The EGF-like 5; calcium-binding domain occupies 318-359; sequence DIDECSVIPGVCETGDCSNTVGSYFCLCPRGFVTSTDGSRCI. A glycan (O-linked (Glc) serine) is linked at Ser340. Positions 364 to 417 constitute a TB 2 domain; sequence GTCFSGLVNGRCAQELPGRMAKAQCCCEPGRCWSIGTIPEACPVRGSEEYRRLC. An N-linked (GlcNAc...) asparagine glycan is attached at Asn485. Positions 487-527 constitute an EGF-like 6 domain; that stretch reads TIDICKHHANLCLNGRCIPTVSSYRCECNMGYKQDANGDCI. 15 cysteine pairs are disulfide-bonded: Cys491–Cys503, Cys498–Cys512, Cys514–Cys526, Cys532–Cys542, Cys537–Cys551, Cys553–Cys566, Cys572–Cys584, Cys579–Cys593, Cys595–Cys608, Cys614–Cys625, Cys620–Cys634, Cys636–Cys649, Cys655–Cys666, Cys661–Cys675, and Cys677–Cys690. Ser509 is a glycosylation site (O-linked (Glc) serine). The region spanning 528-567 is the EGF-like 7; calcium-binding domain; sequence DVDECTSNPCSNGDCVNTPGSYYCKCHAGFQRTPTKQACI. A glycan (O-linked (Glc) serine) is linked at Ser548. An EGF-like 8; calcium-binding domain is found at 568-609; it reads DIDECIQNGVLCKNGRCVNTDGSFQCICNAGFELTTDGKNCV. Residue Ser590 is glycosylated (O-linked (Glc) serine). Residues 610–650 enclose the EGF-like 9; calcium-binding domain; the sequence is DHDECTTTNMCLNGMCINEDGSFKCVCKPGFILAPNGRYCT. A glycan (O-linked (Glc) serine) is linked at Ser631. The 41-residue stretch at 651-691 folds into the EGF-like 10; calcium-binding domain; sequence DVDECQTPGICMNGHCINNEGSFRCDCPPGLAVGVDGRVCV. Residue Ser672 is glycosylated (O-linked (Glc) serine). The region spanning 697 to 749 is the TB 3 domain; it reads STCYGEIKKGVCVRPFPGAVTKSECCCANPDYGFGEPCQPCPAKNSAEFHGLC. The 42-residue stretch at 761–802 folds into the EGF-like 11; calcium-binding domain; sequence DINECALDPDICANGICENLRGSYRCNCNSGYEPDASGRNCI. Disulfide bonds link Cys765/Cys777, Cys772/Cys786, Cys788/Cys801, Cys807/Cys819, Cys814/Cys828, Cys830/Cys843, Cys849/Cys859, Cys854/Cys868, and Cys870/Cys883. Residues 803–844 form the EGF-like 12; calcium-binding domain; the sequence is DIDECLVNRLLCDNGLCRNTPGSYSCTCPPGYVFRTETETCE. The O-linked (Glc) serine glycan is linked to Ser825. An EGF-like 13; calcium-binding domain is found at 845-883; sequence DVNECESNPCVNGACRNNLGSFHCECSPGSKLSSTGLIC. Ser865 carries an O-linked (Glc) serine glycan. The TB 4 domain occupies 889-940; the sequence is GTCWLNIQDNRCEVNINGATLKSECCATLGAAWGSPCERCELDAACPRGFAR. In terms of domain architecture, EGF-like 14; calcium-binding spans 948–989; sequence DVNECEVFPGVCPNGRCVNSKGSFHCECPEGLTLDGTGRVCL. Cystine bridges form between Cys952–Cys964, Cys959–Cys973, and Cys975–Cys988. O-linked (Glc) serine glycosylation is present at Ser970. Positions 994 to 1045 constitute a TB 5 domain; sequence EHCFLKWDEDECIHPVPGKFRMDACCCAVGAAWGTECEECPKPGTKEYETLC. An EGF-like 15; calcium-binding domain is found at 1066 to 1107; it reads DINECKAFPGMCTYGKCRNTIGSFKCRCNNGFALDMEERNCT. Disulfide bonds link Cys1070–Cys1082, Cys1077–Cys1091, Cys1093–Cys1106, Cys1112–Cys1124, Cys1119–Cys1133, Cys1135–Cys1149, Cys1155–Cys1167, Cys1162–Cys1176, Cys1178–Cys1191, Cys1197–Cys1209, Cys1204–Cys1218, Cys1220–Cys1233, Cys1239–Cys1250, Cys1246–Cys1259, Cys1261–Cys1274, Cys1280–Cys1292, Cys1287–Cys1301, Cys1303–Cys1316, Cys1322–Cys1334, Cys1329–Cys1343, Cys1345–Cys1358, Cys1364–Cys1377, Cys1371–Cys1386, Cys1388–Cys1399, Cys1405–Cys1418, Cys1412–Cys1427, Cys1429–Cys1440, Cys1446–Cys1458, Cys1453–Cys1467, Cys1469–Cys1482, Cys1488–Cys1499, Cys1494–Cys1508, Cys1510–Cys1523, Cys1529–Cys1540, Cys1535–Cys1549, and Cys1551–Cys1564. The O-linked (Glc) serine glycan is linked to Ser1088. N-linked (GlcNAc...) asparagine glycosylation occurs at Asn1105. The 43-residue stretch at 1108–1150 folds into the EGF-like 16; calcium-binding domain; that stretch reads DIDECRISPDLCGSGICVNTPGSFECECFEGYESGFMMMKNCM. Residues 1151 to 1192 enclose the EGF-like 17; calcium-binding domain; the sequence is DIDECERNPLLCRGGTCVNTEGSFQCDCPLGHELSPSREDCV. O-linked (Glc) serine glycosylation is present at Ser1173. In terms of domain architecture, EGF-like 18; calcium-binding spans 1193 to 1234; the sequence is DINECSLSDNLCRNGKCVNMIGTYQCSCNPGYQATPDRQGCT. Residue Thr1215 is glycosylated (O-linked (Glc) threonine). The EGF-like 19; calcium-binding domain maps to 1235-1275; the sequence is DIDECMIMNGGCDTQCTNSEGSYECSCSEGYALMPDGRSCA. O-linked (Glc) serine glycosylation occurs at Ser1256. The EGF-like 20; calcium-binding domain maps to 1276–1317; the sequence is DIDECENNPDICDGGQCTNIPGEYRCLCYDGFMASMDMKTCI. The 42-residue stretch at 1318–1359 folds into the EGF-like 21; calcium-binding domain; the sequence is DVNECDLNPNICMFGECENTKGSFICHCQLGYSVKKGTTGCT. A glycan (O-linked (Glc) serine) is linked at Ser1340. One can recognise an EGF-like 22; calcium-binding domain in the interval 1360-1400; the sequence is DVDECEIGAHNCDMHASCLNVPGSFKCSCREGWVGNGIKCI. O-linked (Glc) serine glycosylation is present at Ser1383. An EGF-like 23; calcium-binding domain is found at 1401-1441; sequence DLDECANGTHQCSINAQCVNTPGSYRCACSEGFTGDGFTCS. An N-linked (GlcNAc...) asparagine glycan is attached at Asn1407. The EGF-like 24; calcium-binding domain occupies 1442 to 1483; sequence DVDECAENTNLCENGQCLNVPGAYRCECEMGFTPASDSRSCQ. The region spanning 1484–1524 is the EGF-like 25; calcium-binding domain; sequence DIDECSFQNICVFGTCNNLPGMFHCICDDGYELDRTGGNCT. Residue Asn1522 is glycosylated (N-linked (GlcNAc...) asparagine). Residues 1525-1565 enclose the EGF-like 26; calcium-binding domain; sequence DIDECADPINCVNGLCVNTPGRYECNCPPDFQLNPTGVGCV. The TB 6 domain occupies 1570–1626; that stretch reads GNCYLKFGPRGDGSLSCNTEVGVGVSRSSCCCSLGKAWGNPCETCPPVNSTEYYTLC. Residue Asn1618 is glycosylated (N-linked (GlcNAc...) asparagine). The EGF-like 27; calcium-binding domain maps to 1643-1684; sequence DIDECQELPGLCQGGNCINTFGSFQCECPQGYYLSEETRICE. Cystine bridges form between Cys1647-Cys1659, Cys1654-Cys1668, Cys1670-Cys1683, Cys1689-Cys1701, Cys1696-Cys1710, and Cys1712-Cys1725. Residue Ser1665 is glycosylated (O-linked (Glc) serine). The 42-residue stretch at 1685-1726 folds into the EGF-like 28; calcium-binding domain; it reads DIDECFAHPGVCGPGTCYNTLGNYTCICPPEYMQVNGGHNCM. Asn1707 carries N-linked (GlcNAc...) asparagine glycosylation. Residues 1728-2164 form an interaction with MFAP4 region; sequence MRKSFCYRSY…VPSLHDTRED (437 aa). One can recognise a TB 7 domain in the interval 1731-1784; the sequence is SFCYRSYNGTTCENELPFNVTKRMCCCTYNVGKAWNKPCEPCPTPGTADFKTIC. N-linked (GlcNAc...) asparagine glycosylation is found at Asn1738 and Asn1749. Residues 1801–1842 enclose the EGF-like 29; calcium-binding domain; it reads DIDECKEIPGICANGVCINQIGSFRCECPTGFSYNDLLLVCE. Disulfide bonds link Cys1805–Cys1817, Cys1812–Cys1826, Cys1828–Cys1841, Cys1847–Cys1860, Cys1854–Cys1869, Cys1871–Cys1883, Cys1889–Cys1901, Cys1896–Cys1910, Cys1912–Cys1925, Cys1931–Cys1941, Cys1936–Cys1950, Cys1952–Cys1964, Cys1970–Cys1983, Cys1978–Cys1992, Cys1994–Cys2007, Cys2013–Cys2025, Cys2020–Cys2034, Cys2036–Cys2047, Cys2053–Cys2065, Cys2060–Cys2074, and Cys2076–Cys2089. An EGF-like 30; calcium-binding domain is found at 1843 to 1884; that stretch reads DIDECSNGDNLCQRNADCINSPGSYRCECAAGFKLSPNGACV. O-linked (Glc) serine glycosylation is present at Ser1866. The EGF-like 31; calcium-binding domain occupies 1885–1926; the sequence is DRNECLEIPNVCSHGLCVDLQGSYQCICNNGFKASQDQTMCM. The EGF-like 32; calcium-binding domain maps to 1927–1965; the sequence is DVDECERHPCGNGTCKNTVGSYNCLCYPGFELTHNNDCL. The N-linked (GlcNAc...) asparagine glycan is linked to Asn1938. A glycan (O-linked (Glc) serine) is linked at Ser1947. Residues 1966-2008 enclose the EGF-like 33; calcium-binding domain; the sequence is DIDECSSFFGQVCRNGRCFNEIGSFKCLCNEGYELTPDGKNCI. An O-linked (Glc) serine glycan is attached at Ser1989. An EGF-like 34; calcium-binding domain is found at 2009-2048; sequence DTNECVALPGSCSPGTCQNLEGSFRCICPPGYEVRSENCI. The EGF-like 35; calcium-binding domain maps to 2049-2090; it reads DINECDEDPNICLFGSCTNTPGGFQCICPPGFVLSDNGRRCF. The TB 8 domain occupies 2095 to 2148; that stretch reads SFCFTNFENGKCSVPKAFNTTKAKCCCSKMPGEGWGDPCELCPKDDEVAFQDLC. Asn2113 carries N-linked (GlcNAc...) asparagine glycosylation. An EGF-like 36; calcium-binding domain is found at 2164 to 2205; it reads DVNECLESPGICSNGQCINTDGSFRCECPMGYNLDYTGVRCV. 15 disulfides stabilise this stretch: Cys2168–Cys2180, Cys2175–Cys2189, Cys2191–Cys2204, Cys2210–Cys2221, Cys2216–Cys2230, Cys2232–Cys2244, Cys2250–Cys2261, Cys2257–Cys2270, Cys2272–Cys2285, Cys2291–Cys2305, Cys2298–Cys2314, Cys2316–Cys2329, Cys2335–Cys2347, Cys2342–Cys2356, and Cys2358–Cys2371. Ser2186 carries O-linked (Glc) serine glycosylation. In terms of domain architecture, EGF-like 37; calcium-binding spans 2206–2245; sequence DTDECSIGNPCGNGTCTNVIGSFECTCNEGFEPGPMMNCE. The N-linked (GlcNAc...) asparagine glycan is linked to Asn2218. One can recognise an EGF-like 38; calcium-binding domain in the interval 2246–2286; that stretch reads DINECAQNPLLCAFRCMNTFGSYECTCPVGYALREDQKMCK. Ser2267 carries O-linked (Glc) serine glycosylation. Residues 2287–2330 enclose the EGF-like 39; calcium-binding domain; sequence DLDECAEGLHDCESRGMMCKNLIGTFMCICPPGMARRPDGEGCV. The EGF-like 40; calcium-binding domain maps to 2331–2372; it reads DENECRTKPGICENGRCVNIIGSYRCECNEGFQSSSSGTECL. The O-linked (Glc) serine glycan is linked to Ser2353. In terms of domain architecture, TB 9 spans 2377–2430; the sequence is GLCFAEVLQTMCQMASSSRNLVTKSECCCDGGRGWGHQCELCPLPGTAQYKKIC. The 42-residue stretch at 2442 to 2483 folds into the EGF-like 41; calcium-binding domain; the sequence is DIDECKVMPSLCTNGQCVNTMGSFRCFCKVGYTTDISGTACV. 21 disulfides stabilise this stretch: Cys2446–Cys2458, Cys2453–Cys2467, Cys2469–Cys2482, Cys2488–Cys2499, Cys2495–Cys2508, Cys2510–Cys2523, Cys2529–Cys2540, Cys2536–Cys2549, Cys2551–Cys2562, Cys2568–Cys2581, Cys2575–Cys2590, Cys2592–Cys2605, Cys2611–Cys2621, Cys2617–Cys2630, Cys2632–Cys2645, Cys2651–Cys2662, Cys2657–Cys2671, Cys2673–Cys2686, Cys2692–Cys2703, Cys2699–Cys2712, and Cys2714–Cys2726. Ser2464 carries O-linked (Glc) serine glycosylation. An EGF-like 42; calcium-binding domain is found at 2484–2524; the sequence is DLDECSQSPKPCNFICKNTKGSYQCSCPRGYVLQEDGKTCK. An O-linked (Glc) serine glycan is attached at Ser2505. An EGF-like 43; calcium-binding domain is found at 2525–2563; sequence DLDECQTKQHNCQFLCVNTLGGFTCKCPPGFTQHHTACI. The region spanning 2564–2606 is the EGF-like 44; calcium-binding domain; the sequence is DNNECGSQPSLCGAKGICQNTPGSFSCECQRGFSLDASGLNCE. Ser2587 carries an O-linked (Glc) serine glycan. One can recognise an EGF-like 45; calcium-binding domain in the interval 2607–2646; sequence DVDECDGNHRCQHGCQNILGGYRCGCPQGYVQHYQWNQCV. Residues 2647-2687 form the EGF-like 46; calcium-binding domain; that stretch reads DENECSNPGACGSASCYNTLGSYKCACPSGFSFDQFSSACH. A glycan (O-linked (Glc) serine) is linked at Ser2668. Positions 2688–2727 constitute an EGF-like 47; calcium-binding domain; it reads DVNECSSSKNPCSYGCSNTEGGYLCGCPPGYFRVGQGHCV. Asn2803 is a glycosylation site (N-linked (GlcNAc...) asparagine).

The protein belongs to the fibrillin family. As to quaternary structure, interacts with BMP2, BMP4, BMP7, BMP10 and GDF5. Interacts with MFAP2 and MFAP5. Interacts with ADAMTSL5. Interacts with MFAP4. In terms of processing, N-glycosylated. Post-translationally, O-glycosylated on serine residues by POGLUT2 and POGLUT3. As to expression, widely expressed.

Its subcellular location is the secreted. The protein resides in the extracellular space. It localises to the extracellular matrix. Its function is as follows. Fibrillins are structural components of 10-12 nm extracellular calcium-binding microfibrils, which occur either in association with elastin or in elastin-free bundles. Fibrillin-2-containing microfibrils regulate the early process of elastic fiber assembly. Regulates osteoblast maturation by controlling TGF-beta bioavailability and calibrating TGF-beta and BMP levels, respectively. Hormone secreted by trophoblasts that promotes trophoblast invasiveness. Has glucogenic activity: is able to increase plasma glucose levels. This Mus musculus (Mouse) protein is Fibrillin-2.